The chain runs to 846 residues: Choline trimethylamine-lyase (846 aa).

Residues 60-718 (PRHVKLKENF…LLGASANGRR (659 aa)) enclose the PFL domain. The Cysteine radical intermediate role is filled by Cys489. Catalysis depends on Glu491, which acts as the Proton acceptor. The 122-residue stretch at 725 to 846 (DGISPTQGAD…IISRTMLHGF (122 aa)) folds into the Glycine radical domain. Gly821 is subject to Glycine radical.

It belongs to the glycyl radical enzyme (GRE) family. CutC subfamily. As to quaternary structure, homodimer. Requires the activating protein CutD to generate the key active site glycyl radical on Gly-821 that is involved in catalysis.

It catalyses the reaction choline = trimethylamine + acetaldehyde. Its pathway is amine and polyamine metabolism; choline degradation. In terms of biological role, glycine radical enzyme that catalyzes the cleavage of a C-N bond in choline, producing trimethylamine (TMA) and acetaldehyde. Is involved in the anaerobic choline utilization pathway that allows D.alaskensis to grow on choline as a source of carbon and energy. Is strictly specific for choline as substrate. The polypeptide is Choline trimethylamine-lyase (Oleidesulfovibrio alaskensis (strain ATCC BAA-1058 / DSM 17464 / G20) (Desulfovibrio alaskensis)).